The following is a 454-amino-acid chain: F-box/WD-40 repeat-containing protein At3g52030 (454 aa).

Residues 20–66 (PTSIESLDADILCIIFSFLDLFDLVHCTVVCNSWNAVIKRLKLLQAS) form the F-box domain. WD repeat units follow at residues 85-116 (DRPA…RWEA), 117-153 (HSHR…CMEE), 170-214 (SKKL…SIFP), 215-255 (SRAG…CSQI), 258-296 (TQGG…PVAT), 301-340 (ITAG…RLWE), 343-383 (VSPN…VLSR), and 422-454 (KVRP…FNLS).

The protein is F-box/WD-40 repeat-containing protein At3g52030 of Arabidopsis thaliana (Mouse-ear cress).